The chain runs to 3473 residues: Genome polyprotein (3473 aa).

The stretch at 514–604 forms a coiled coil; it reads EVQDALEKSM…RNDIEALKKK (91 aa). Disordered stretches follow at residues 602–644 and 1278–1306; these read KKKP…SEAQ and YLADEQPTTSAPRTSIVNTEDDPPTEGEI. Composition is skewed to polar residues over residues 607 to 622 and 1278 to 1295; these read QSVTPLPSPSGNSGTA and YLADEQPTTSAPRTSIVN. A run of 2 helical transmembrane segments spans residues 1496 to 1516 and 1595 to 1615; these read DKWIWAALASILVGAALLHYY and MSSLLTILSVVASLVMWGKIP. Positions 1751-1917 constitute an SF3 helicase domain; that stretch reads LELMNESYTY…PDVPKNEANP (167 aa). 1777-1784 provides a ligand contact to ATP; that stretch reads GAPGVGKS. Residues 2363-2383 form a helical membrane-spanning segment; it reads ILLAIGASVAVAGVAVGAVIL. Residues 2394 to 2404 are compositionally biased toward acidic residues; that stretch reads EDEEIEGEEGE. 2 disordered regions span residues 2394 to 2415 and 2438 to 2465; these read EDEEIEGEEGETQASGAHESDG and VAEAHEEKDAEKPRKSGNPTRKSYLGLS. The span at 2438 to 2451 shows a compositional bias: basic and acidic residues; the sequence is VAEAHEEKDAEKPR. One can recognise a Peptidase C3 domain in the interval 2632–2850; sequence GVDRDLSMTN…YAETLTQEHL (219 aa). Active-site for picornain 3C-like protease activity residues include His2680, Glu2717, and Cys2811. In terms of domain architecture, RdRp catalytic spans 3155–3286; that stretch reads TKGFAGDYSK…SVHEEFLDVY (132 aa).

Specific enzymatic cleavages by picornain 3C-like protease in vivo yield mature proteins. Picornain 3C-like protease is autocatalytically processed.

It is found in the virion. It localises to the host membrane. The catalysed reaction is RNA(n) + a ribonucleoside 5'-triphosphate = RNA(n+1) + diphosphate. Picornain 3C-like protease is a thiol protease that probably cleaves the polyprotein. The sequence is that of Genome polyprotein from Oryza sativa (Rice).